The following is a 63-amino-acid chain: Large ribosomal subunit protein uL29 (63 aa).

This sequence belongs to the universal ribosomal protein uL29 family.

The protein is Large ribosomal subunit protein uL29 (rpmC) of Buchnera aphidicola subsp. Acyrthosiphon kondoi (Acyrthosiphon kondoi symbiotic bacterium).